Here is a 138-residue protein sequence, read N- to C-terminus: uncharacterized protein (138 aa).

The first 37 residues, 1 to 37, serve as a signal peptide directing secretion; it reads MNSTFTSQPLLNRSEPRVFKEFYRLVIGCNPAWQVMA.

It to H.influenzae HI_1631.

This is an uncharacterized protein from Sinorhizobium fredii (strain NBRC 101917 / NGR234).